The chain runs to 106 residues: Gibberellin-regulated protein 12 (106 aa).

Positions 1–22 are cleaved as a signal peptide; the sequence is MMKLIVVFVISSLLFATQFSNG.

Belongs to the GASA family. In terms of processing, six disulfide bonds may be present.

The protein localises to the secreted. In terms of biological role, gibberellin-regulated protein that may function in hormonal controlled steps of development such as seed germination, flowering and seed maturation. The protein is Gibberellin-regulated protein 12 (GASA12) of Arabidopsis thaliana (Mouse-ear cress).